Reading from the N-terminus, the 51-residue chain is Large ribosomal subunit protein eL39 (51 aa).

The protein belongs to the eukaryotic ribosomal protein eL39 family.

In Methanosarcina acetivorans (strain ATCC 35395 / DSM 2834 / JCM 12185 / C2A), this protein is Large ribosomal subunit protein eL39.